The primary structure comprises 146 residues: Hemoglobin subunit beta-1/2 (146 aa).

N-acetylvaline is present on Val-1. Residues 2-146 form the Globin domain; that stretch reads HLTGEEKSGL…VANALAHKYH (145 aa). Thr-12 carries the phosphothreonine modification. Lys-59 bears the N6-acetyllysine mark. Residue His-63 coordinates heme b. Lys-82 carries the N6-acetyllysine modification. Residue His-92 coordinates heme b. Cys-93 is modified (S-nitrosocysteine). N6-acetyllysine is present on Lys-144.

This sequence belongs to the globin family. Heterotetramer of two alpha chains and two beta chains. Red blood cells.

In terms of biological role, involved in oxygen transport from the lung to the various peripheral tissues. The polypeptide is Hemoglobin subunit beta-1/2 (HBB) (Physeter macrocephalus (Sperm whale)).